A 226-amino-acid chain; its full sequence is EEF1A lysine methyltransferase 3 (226 aa).

Residues tryptophan 57, 83–85 (GAG), aspartate 104, tryptophan 133, and alanine 150 contribute to the S-adenosyl-L-methionine site.

The protein belongs to the methyltransferase superfamily. METTL21 family. Interacts with members of the heat shock protein 70 and 90 families and of the TCP-1 chaperonin family, as well as with HSPD1, STIP1 and tubulin; at least some of these proteins may be methylation substrates.

The protein resides in the cytoplasm. It is found in the cytoskeleton. It localises to the microtubule organizing center. The protein localises to the centrosome. The enzyme catalyses L-lysyl-[protein] + 3 S-adenosyl-L-methionine = N(6),N(6),N(6)-trimethyl-L-lysyl-[protein] + 3 S-adenosyl-L-homocysteine + 3 H(+). It catalyses the reaction L-lysyl-[protein] + S-adenosyl-L-methionine = N(6)-methyl-L-lysyl-[protein] + S-adenosyl-L-homocysteine + H(+). It carries out the reaction N(6)-methyl-L-lysyl-[protein] + S-adenosyl-L-methionine = N(6),N(6)-dimethyl-L-lysyl-[protein] + S-adenosyl-L-homocysteine + H(+). The catalysed reaction is N(6),N(6)-dimethyl-L-lysyl-[protein] + S-adenosyl-L-methionine = N(6),N(6),N(6)-trimethyl-L-lysyl-[protein] + S-adenosyl-L-homocysteine + H(+). Functionally, protein-lysine methyltransferase that selectively mono-, di- and trimethylates 'Lys-165' of the translation elongation factors EEF1A1 and EEF1A2 in an aminoacyl-tRNA and GTP-dependent manner. EEF1A1 methylation by EEF1AKMT3 is dynamic as well as inducible by stress conditions, such as ER-stress, and plays a regulatory role on mRNA translation. This Homo sapiens (Human) protein is EEF1A lysine methyltransferase 3.